The chain runs to 610 residues: MENIFDAKAFLSRVTSQPGVYRMYDASGTVIYVGKAKDLKKRLSSYFRAQVNSRKTEALVKCIANIDVTVTHTETEALLLEHSYIQRYQPRYNVLLRDDKSYPYIYLSADKHPRLASYRGAKHAKGEYFGPFPNSLAVRETLALMQKLFPIRQCEDSVYRNRSRPCLQYQIGRCLAPCVKGYVSDEEYAQQVNYVRLFLSGDDSQVIEGLIKRMEEASQALRFEEAARIRDQIHAVRQVTEKQFVANIGDDLDVISVAFNGAIACVYVLFFRQGKVLGSRSYFPKVPANTSLDEVVQTFIGQFYLQGSAIRTLPTEILLDFNLEDKTILAESISSIAGRKIHIQTKPRGDRARYLKLARTNAATALATKQVEQSTISQRYNSLMSLLEMKEIKRMECFDISHTMGEQTVASCVVFDMNGPLKSEYRRYNISGITPGDDYAAMNQVLTRRYGKSLEESKIPDIIFIDGGKGQLAQAIDVFQSLDVDWDKSHPKLIGVAKGSDRKAGLETLFFKPEGEGVALPSDSPALHLIQHIRDESHRHAITGHRQRRAKVKNTSSLESIEGVGPKRRQMLLKYMGGLQALRDASVEEIAKVPTISTALAEKIFNALKH.

Residues 16–94 (SQPGVYRMYD…IQRYQPRYNV (79 aa)) enclose the GIY-YIG domain. The 36-residue stretch at 204–239 (SQVIEGLIKRMEEASQALRFEEAARIRDQIHAVRQV) folds into the UVR domain.

The protein belongs to the UvrC family. Interacts with UvrB in an incision complex.

It is found in the cytoplasm. Its function is as follows. The UvrABC repair system catalyzes the recognition and processing of DNA lesions. UvrC both incises the 5' and 3' sides of the lesion. The N-terminal half is responsible for the 3' incision and the C-terminal half is responsible for the 5' incision. The polypeptide is UvrABC system protein C (Proteus mirabilis (strain HI4320)).